The primary structure comprises 313 residues: Porphobilinogen deaminase (313 aa).

The residue at position 242 (cysteine 242) is an S-(dipyrrolylmethanemethyl)cysteine.

The protein belongs to the HMBS family. Monomer. Dipyrromethane is required as a cofactor.

The catalysed reaction is 4 porphobilinogen + H2O = hydroxymethylbilane + 4 NH4(+). It participates in porphyrin-containing compound metabolism; protoporphyrin-IX biosynthesis; coproporphyrinogen-III from 5-aminolevulinate: step 2/4. In terms of biological role, tetrapolymerization of the monopyrrole PBG into the hydroxymethylbilane pre-uroporphyrinogen in several discrete steps. In Escherichia fergusonii (strain ATCC 35469 / DSM 13698 / CCUG 18766 / IAM 14443 / JCM 21226 / LMG 7866 / NBRC 102419 / NCTC 12128 / CDC 0568-73), this protein is Porphobilinogen deaminase.